We begin with the raw amino-acid sequence, 82 residues long: Small ribosomal subunit protein uS17 (82 aa).

The protein belongs to the universal ribosomal protein uS17 family. As to quaternary structure, part of the 30S ribosomal subunit.

Functionally, one of the primary rRNA binding proteins, it binds specifically to the 5'-end of 16S ribosomal RNA. The protein is Small ribosomal subunit protein uS17 of Xanthobacter autotrophicus (strain ATCC BAA-1158 / Py2).